A 316-amino-acid chain; its full sequence is Mitochondrial distribution and morphology protein 12 (316 aa).

One can recognise an SMP-LTD domain in the interval 1-312 (MSIDLEWNGL…FPNFHTLVLG (312 aa)).

It belongs to the MDM12 family. In terms of assembly, component of the ER-mitochondria encounter structure (ERMES) or MDM complex, composed of MMM1, MDM10, MDM12 and MDM34. An MMM1 homodimer associates with one molecule of MDM12 on each side in a pairwise head-to-tail manner, and the SMP-LTD domains of MMM1 and MDM12 generate a continuous hydrophobic tunnel for phospholipid trafficking.

The protein resides in the mitochondrion outer membrane. Its subcellular location is the endoplasmic reticulum membrane. Functionally, component of the ERMES/MDM complex, which serves as a molecular tether to connect the endoplasmic reticulum (ER) and mitochondria. Components of this complex are involved in the control of mitochondrial shape and protein biogenesis, and function in nonvesicular lipid trafficking between the ER and mitochondria. MDM12 is required for the interaction of the ER-resident membrane protein MMM1 and the outer mitochondrial membrane-resident beta-barrel protein MDM10. The MDM12-MMM1 subcomplex functions in the major beta-barrel assembly pathway that is responsible for biogenesis of all mitochondrial outer membrane beta-barrel proteins, and acts in a late step after the SAM complex. The MDM10-MDM12-MMM1 subcomplex further acts in the TOM40-specific pathway after the action of the MDM12-MMM1 complex. Essential for establishing and maintaining the structure of mitochondria and maintenance of mtDNA nucleoids. The protein is Mitochondrial distribution and morphology protein 12 of Postia placenta (strain ATCC 44394 / Madison 698-R) (Brown rot fungus).